The following is a 338-amino-acid chain: tRNA methyltransferase 10 homolog A (338 aa).

Disordered regions lie at residues Met-1–Arg-91 and Arg-296–His-338. At Ser-22 the chain carries Phosphoserine. The stretch at Lys-52–Pro-80 forms a coiled coil. The segment covering Arg-61–Gln-73 has biased composition (basic residues). Positions Asp-88–Val-279 constitute an SAM-dependent MTase TRM10-type domain. Residues Glu-308–Ser-328 show a composition bias toward basic and acidic residues. A compositionally biased stretch (polar residues) spans Thr-329–His-338. A Phosphoserine modification is found at Ser-335.

Belongs to the class IV-like SAM-binding methyltransferase superfamily. TRM10 family. As to quaternary structure, interacts with tRNA.

It localises to the nucleus. The protein localises to the nucleolus. It carries out the reaction guanosine(9) in tRNA + S-adenosyl-L-methionine = N(1)-methylguanosine(9) in tRNA + S-adenosyl-L-homocysteine + H(+). Functionally, S-adenosyl-L-methionine-dependent guanine N(1)-methyltransferase that catalyzes the formation of N(1)-methylguanine at position 9 (m1G9) in tRNAs. Probably not able to catalyze formation of N(1)-methyladenine at position 9 (m1A9) in tRNAs. The chain is tRNA methyltransferase 10 homolog A (TRMT10A) from Bos taurus (Bovine).